The primary structure comprises 286 residues: MKLSVYGKGGIGKSTTSCNISVALARRGKKVLQIGCDPKHDSTFTLTGFLIPTIIDTLQAKDYHYEDVWPEDVIYRGYGGVDCVEAGGPPAGAGCGGYVVGETVKLLKELNAFDEYDVILFDVLGDVVCGGFAAPLNYSDYCLIITDNGFDALFAANRIAASVREKARTHTLRLAGLIGNRTSKRDLIDKYIEAVPMPVLEVLPLIEDIRISRVKGKTVFEMAETEPSLLTVCDYYLNIADQILARPEGVVPKDAADRDLFSLLSDFYLNPPKQTTEAIAPEALLV.

Residues 10 to 15 and K39 contribute to the ATP site; that span reads GIGKST. S14 provides a ligand contact to Mg(2+). Residues C95 and C129 each contribute to the [4Fe-4S] cluster site. An ATP-binding site is contributed by 180-181; the sequence is NR.

Belongs to the NifH/BchL/ChlL family. As to quaternary structure, homodimer. Protochlorophyllide reductase is composed of three subunits; ChlL, ChlN and ChlB. Requires [4Fe-4S] cluster as cofactor.

The catalysed reaction is chlorophyllide a + oxidized 2[4Fe-4S]-[ferredoxin] + 2 ADP + 2 phosphate = protochlorophyllide a + reduced 2[4Fe-4S]-[ferredoxin] + 2 ATP + 2 H2O. It participates in porphyrin-containing compound metabolism; chlorophyll biosynthesis (light-independent). Functionally, component of the dark-operative protochlorophyllide reductase (DPOR) that uses Mg-ATP and reduced ferredoxin to reduce ring D of protochlorophyllide (Pchlide) to form chlorophyllide a (Chlide). This reaction is light-independent. The L component serves as a unique electron donor to the NB-component of the complex, and binds Mg-ATP. This chain is Light-independent protochlorophyllide reductase iron-sulfur ATP-binding protein, found in Synechococcus elongatus (strain ATCC 33912 / PCC 7942 / FACHB-805) (Anacystis nidulans R2).